The sequence spans 278 residues: Energy-coupling factor transporter ATP-binding protein EcfA1 (278 aa).

In terms of domain architecture, ABC transporter spans 5–239; sequence IRVQHLNYTY…GMELLRLGLD (235 aa). 39–46 is a binding site for ATP; sequence GHNGSGKS. The Proton acceptor role is filled by Glu165.

The protein belongs to the ABC transporter superfamily. Energy-coupling factor EcfA family. In terms of assembly, forms a stable energy-coupling factor (ECF) transporter complex probably composed of 2 membrane-embedded substrate-binding proteins (S component), 2 ATP-binding proteins (A component) and 2 transmembrane proteins (T component). This complex interacts with a number of substrate-specific components, including FolT and ThiT for 5-formyltetrahydrofolate and thiamine respectively.

The protein localises to the cell membrane. In terms of biological role, ATP-binding (A) component of a common energy-coupling factor (ECF) ABC-transporter complex. Unlike classic ABC transporters this ECF transporter provides the energy necessary to transport a number of different substrates including 5-formyltetrahydrofolate and thiamine. Expression of the complex plus FolT or ThiT in Lactococcus lactis subsp. cremoris (strain NZ9000) allows 5-formyltetrahydrofolate or thiamine uptake respectively; 5-formyltetrahydrofolate or thiamine are not taken up in the absence of FolT/ThiT or the EcfA1A2T complex. Deenergized L.lactis subsp. cremoris (treated with 2-deoxyglucose) does not take up substrate. The sequence is that of Energy-coupling factor transporter ATP-binding protein EcfA1 from Lacticaseibacillus paracasei (strain ATCC 334 / BCRC 17002 / CCUG 31169 / CIP 107868 / KCTC 3260 / NRRL B-441) (Lactobacillus paracasei).